We begin with the raw amino-acid sequence, 309 residues long: MEIQFLGTGAGQPAKARNVSSLVLKLLDEINEVWMFDCGEGTQRQILETTIKPRKVKKIFITHMHGDHVFGLPGFLSSRAFQANEEQTDLDIYGPVGIKSFVMTGLRTSGSRLPYRIHFHEFDESSLGKIMETDKFTVYAEKLDHTIFCMGYRVVQKDLEGTLDAEALKLAGVPFGPLFGKVKNGENVTLEDGREIIAKDYISEPKKGKVITILGDTRKTDASIRLALGADVLVHESTYGKGDERIAKSHGHSTNMQAADIAKQANAKRLLLNHVSARFMGRDCWQMEEDAKTIFSNTHLVRDLEEVGI.

Zn(2+) is bound by residues His-63, His-65, Asp-67, His-68, His-145, Asp-216, and His-274. Residue Asp-67 is the Proton acceptor of the active site.

This sequence belongs to the RNase Z family. As to quaternary structure, homodimer. The cofactor is Zn(2+).

The catalysed reaction is Endonucleolytic cleavage of RNA, removing extra 3' nucleotides from tRNA precursor, generating 3' termini of tRNAs. A 3'-hydroxy group is left at the tRNA terminus and a 5'-phosphoryl group is left at the trailer molecule.. Functionally, zinc phosphodiesterase, which displays some tRNA 3'-processing endonuclease activity. Probably involved in tRNA maturation, by removing a 3'-trailer from precursor tRNA. This Streptococcus agalactiae serotype Ia (strain ATCC 27591 / A909 / CDC SS700) protein is Ribonuclease Z.